A 308-amino-acid chain; its full sequence is MNKELQPKVIFLMGPTASGKTALALELAEKHNCEIISVDSALIYRGMDIGSAKPSADELARGPHRLIDIRDPRESYSAADFRADAIAEIELIVSMGKTPVLVGGTMMYFKALLEGLSPLPSADEAIRAEIQAEADEKGWEALHDQLREIDPVSAERIHPNDPQRLSRALEVYRISGKSMTELTQTKSAPLPYEVVQFAIAPRERKVLHDLIAQRFAIMLKQGFLEEVTELKARGDLHLDLPSMRCVGYRQCWQYLDGEFDYDTMVEKAVAATRQLAKRQLTWLRSWPELNWLESGAEGNLVTLMRQCR.

14 to 21 (GPTASGKT) provides a ligand contact to ATP. Residue 16–21 (TASGKT) participates in substrate binding. Interaction with substrate tRNA stretches follow at residues 39–42 (DSAL), 163–167 (QRLSR), and 244–249 (RCVGYR).

It belongs to the IPP transferase family. Monomer. Mg(2+) is required as a cofactor.

It catalyses the reaction adenosine(37) in tRNA + dimethylallyl diphosphate = N(6)-dimethylallyladenosine(37) in tRNA + diphosphate. Its function is as follows. Catalyzes the transfer of a dimethylallyl group onto the adenine at position 37 in tRNAs that read codons beginning with uridine, leading to the formation of N6-(dimethylallyl)adenosine (i(6)A). This Shewanella baltica (strain OS223) protein is tRNA dimethylallyltransferase.